Consider the following 788-residue polypeptide: E3 ubiquitin-protein ligase SspH2 (788 aa).

The interval 1–481 (MPFHIGSGCL…PGYSGPIIRF (481 aa)) is interaction with host membrane and with target proteins. 12 LRR repeats span residues 223–242 (HITT…ALPP), 243–264 (ELRT…PPGL), 265–282 (LELS…ALPS), 283–302 (GLCK…VLPP), 303–324 (GLQE…PSEL), 325–342 (CKLW…MLPS), 343–364 (GLQE…PSEL), 365–382 (YKLW…ALPS), 383–404 (GLKE…PSEL), 405–422 (KELM…MLPS), 423–445 (GLLS…IHLS), and 446–466 (SETT…QALR). Residues 482 to 491 (DMAGASAPRE) form a linker region. The segment at 492–788 (TRALHLAAAD…SYLNVQWRRN (297 aa)) is E3 ubiquitin-protein ligase catalytic domain. The NEL domain occupies 494-788 (ALHLAAADWL…SYLNVQWRRN (295 aa)). Catalysis depends on Cys-580, which acts as the Glycyl thioester intermediate.

Belongs to the LRR-containing bacterial E3 ligase family. In terms of processing, ubiquitinated in the presence of host E1 ubiquitin-activating enzyme UBA1, E2 ubiquitin-conjugating enzyme UBE2D2 and ubiquitin.

The protein resides in the secreted. Its subcellular location is the host cytoplasm. It is found in the host apical cell membrane. It catalyses the reaction S-ubiquitinyl-[E2 ubiquitin-conjugating enzyme]-L-cysteine + [acceptor protein]-L-lysine = [E2 ubiquitin-conjugating enzyme]-L-cysteine + N(6)-ubiquitinyl-[acceptor protein]-L-lysine.. With respect to regulation, exists in an autoinhibited state in the absence of substrate protein, due to interactions of the leucine-rich repeat domain with the catalytic domain. Is activated upon binding to a substrate protein. In terms of biological role, effector proteins function to alter host cell physiology and promote bacterial survival in host tissues. This protein is an E3 ubiquitin ligase that interferes with host's ubiquitination pathway. The chain is E3 ubiquitin-protein ligase SspH2 (sspH2) from Salmonella typhimurium (strain LT2 / SGSC1412 / ATCC 700720).